The primary structure comprises 240 residues: tRNA (guanine-N(1)-)-methyltransferase (240 aa).

S-adenosyl-L-methionine contacts are provided by residues Gly108 and 127 to 132 (LGDFIL).

It belongs to the RNA methyltransferase TrmD family. Homodimer.

It is found in the cytoplasm. It carries out the reaction guanosine(37) in tRNA + S-adenosyl-L-methionine = N(1)-methylguanosine(37) in tRNA + S-adenosyl-L-homocysteine + H(+). Its function is as follows. Specifically methylates guanosine-37 in various tRNAs. This chain is tRNA (guanine-N(1)-)-methyltransferase, found in Streptococcus mutans serotype c (strain ATCC 700610 / UA159).